Here is a 398-residue protein sequence, read N- to C-terminus: O-methyltransferase mpaG (398 aa).

Ser144 contacts (4E,8E)-10-(4,6-dihydroxy-7-methyl-3-oxo-1,3-dihydro-2-benzofuran-5-yl)-4,8-dimethyldeca-4,8-dienoate. Residue Ser144 participates in 4-farnesyl-3,5-dihydroxy-6-methylphthalide binding. Ser144 contributes to the 6-O-desmethylmycophenolate binding site. Asn197 provides a ligand contact to S-adenosyl-L-homocysteine. (4E,8E)-10-(4,6-dihydroxy-7-methyl-3-oxo-1,3-dihydro-2-benzofuran-5-yl)-4,8-dimethyldeca-4,8-dienoate is bound at residue Tyr199. Position 199 (Tyr199) interacts with 4-farnesyl-3,5-dihydroxy-6-methylphthalide. Tyr199 provides a ligand contact to 6-O-desmethylmycophenolate. Positions 203, 237, 239, 244, 245, 264, and 265 each coordinate S-adenosyl-L-homocysteine. Asp264 contributes to the S-adenosyl-L-methionine binding site. (4E,8E)-10-(4,6-dihydroxy-7-methyl-3-oxo-1,3-dihydro-2-benzofuran-5-yl)-4,8-dimethyldeca-4,8-dienoate is bound by residues Arg265 and Gln267. 6-O-desmethylmycophenolate is bound at residue Arg265. Positions 286, 287, and 302 each coordinate S-adenosyl-L-homocysteine. Position 303 (Ser303) interacts with (4E,8E)-10-(4,6-dihydroxy-7-methyl-3-oxo-1,3-dihydro-2-benzofuran-5-yl)-4,8-dimethyldeca-4,8-dienoate. A 4-farnesyl-3,5-dihydroxy-6-methylphthalide-binding site is contributed by Ser303. Ser303 contributes to the 6-O-desmethylmycophenolate binding site. His306 (proton acceptor) is an active-site residue. Active-site residues include Glu335 and Glu362.

It belongs to the class I-like SAM-binding methyltransferase superfamily. Cation-independent O-methyltransferase family. COMT subfamily. As to quaternary structure, homodimer.

It is found in the cytoplasm. Its subcellular location is the cytosol. It carries out the reaction (4E,8E)-10-(4,6-dihydroxy-7-methyl-3-oxo-1,3-dihydro-2-benzofuran-5-yl)-4,8-dimethyldeca-4,8-dienoate + S-adenosyl-L-methionine = (4E,8E)-10-(4-hydroxy-6-methoxy-7-methyl-3-oxo-1,3-dihydro-2-benzofuran-5-yl)-4,8-dimethyldeca-4,8-dienoate + S-adenosyl-L-homocysteine + H(+). The catalysed reaction is 4-farnesyl-3,5-dihydroxy-6-methylphthalide + S-adenosyl-L-methionine = 4-farnesyl-3,5-dihydroxy-6-methoxylphthalide + S-adenosyl-L-homocysteine + H(+). It catalyses the reaction 6-O-desmethylmycophenolate + S-adenosyl-L-methionine = mycophenolate + S-adenosyl-L-homocysteine + H(+). The protein operates within secondary metabolite biosynthesis; terpenoid biosynthesis. O-methyltransferase; part of the gene cluster that mediates the biosynthesis of mycophenolic acid (MPA), the first isolated antibiotic natural product in the world obtained from a culture of Penicillium brevicompactum in 1893. MpaG methylates farnesyl-DHMP-3C (FDHMP-3C) to yield MFDHMP-3C. The first step of the pathway is the synthesis of 5-methylorsellinic acid (5MOA) by the cytosolic polyketide synthase mpaC. 5MOA is then converted to the phthalide compound 5,7-dihydroxy-4,6-dimethylphthalide (DHMP) by the endoplasmic reticulum-bound cytochrome P450 monooxygenase mpaDE. MpaDE first catalyzes hydroxylation of 5-MOA to 4,6-dihydroxy-2-(hydroxymethyl)-3-methylbenzoic acid (DHMB). MpaDE then acts as a lactone synthase that catalyzes the ring closure to convert DHMB into DHMP. The next step is the prenylation of DHMP by the Golgi apparatus-associated prenyltransferase mpaA to yield farnesyl-DHMP (FDHMP). The ER-bound oxygenase mpaB then mediates the oxidative cleavage the C19-C20 double bond in FDHMP to yield FDHMP-3C via a mycophenolic aldehyde intermediate. The O-methyltransferase mpaG catalyzes the methylation of FDHMP-3C to yield MFDHMP-3C. MpaG and mpaB can also switch the order in which they act and, in this case, the conversion of FDHMP to MFDHMP-3C can take place via 5-O-methyl-FDHMP (MFDHMP). After the cytosolic methylation of FDHMP-3C, MFDHMP-3C enters into peroxisomes probably via free diffusion due to its low molecular weight. Upon a peroxisomal CoA ligation reaction, catalyzed by a beta-oxidation component enzyme acyl-CoA ligase ACL891, MFDHMP-3C-CoA would then be restricted to peroxisomes for the following beta-oxidation pathway steps. The peroxisomal beta-oxidation machinery than converts MFDHMP-3C-CoA into MPA_CoA, via a beta-oxidation chain-shortening process. Finally mpaH acts as a peroxisomal acyl-CoA hydrolase with high substrate specificity toward MPA-CoA to release the final product MPA. MpaH can also hydrolyze DMMPA-CoA to release demethylmycophenolic acid (DMMPA) that is further converted to MPA by mpaG. The polypeptide is O-methyltransferase mpaG (Penicillium brevicompactum).